Here is a 166-residue protein sequence, read N- to C-terminus: Deoxyuridine 5'-triphosphate nucleotidohydrolase (166 aa).

The segment at 1–24 (MACVNEPSPKLQKLDRNGIHGDSS) is disordered. E138 provides a ligand contact to Mg(2+).

It belongs to the dUTPase family. Homotrimer. The cofactor is Mg(2+).

The enzyme catalyses dUTP + H2O = dUMP + diphosphate + H(+). It functions in the pathway pyrimidine metabolism; dUMP biosynthesis; dUMP from dCTP (dUTP route): step 2/2. Functionally, this enzyme is involved in nucleotide metabolism: it produces dUMP, the immediate precursor of thymidine nucleotides and it decreases the intracellular concentration of dUTP, preventing uracil incorporation into DNA. The polypeptide is Deoxyuridine 5'-triphosphate nucleotidohydrolase (DUT) (Arabidopsis thaliana (Mouse-ear cress)).